The primary structure comprises 129 residues: Small ribosomal subunit protein uS11 (129 aa).

Belongs to the universal ribosomal protein uS11 family. As to quaternary structure, part of the 30S ribosomal subunit. Interacts with proteins S7 and S18. Binds to IF-3.

Its function is as follows. Located on the platform of the 30S subunit, it bridges several disparate RNA helices of the 16S rRNA. Forms part of the Shine-Dalgarno cleft in the 70S ribosome. This chain is Small ribosomal subunit protein uS11, found in Rhizorhabdus wittichii (strain DSM 6014 / CCUG 31198 / JCM 15750 / NBRC 105917 / EY 4224 / RW1) (Sphingomonas wittichii).